The following is a 204-amino-acid chain: Probable peptidyl-tRNA hydrolase (204 aa).

The active-site Proton acceptor is the His-36. TRNA contacts are provided by Asn-86 and Asn-132.

The protein belongs to the PTH family.

It catalyses the reaction an N-acyl-L-alpha-aminoacyl-tRNA + H2O = an N-acyl-L-amino acid + a tRNA + H(+). In terms of biological role, peptidyl-tRNA hydrolase that cleaves nascent chains-tRNAs that are not stably fixed in the P-site of 60S ribosome-nascent chain complexes. Acts downstream of the ribosome-associated quality control (RQC) pathway to release non-ubiquitinated nascent chains from 60S and 80S ribosome-nascent chain complexes. Does not act on ubiquitinated nascent chains, which are cleaved by ANKZF1 for degradation. This chain is Probable peptidyl-tRNA hydrolase, found in Mus musculus (Mouse).